The primary structure comprises 74 residues: ATP synthase subunit 9, mitochondrial (74 aa).

2 helical membrane-spanning segments follow: residues 16–36 (GLIG…LGVA) and 50–70 (ILGF…AFLL).

The protein belongs to the ATPase C chain family. F-type ATPases have 2 components, CF(1) - the catalytic core - and CF(0) - the membrane proton channel. CF(1) has five subunits: alpha(3), beta(3), gamma(1), delta(1), epsilon(1). CF(0) has three main subunits: a, b and c.

It is found in the mitochondrion membrane. Functionally, mitochondrial membrane ATP synthase (F(1)F(0) ATP synthase or Complex V) produces ATP from ADP in the presence of a proton gradient across the membrane which is generated by electron transport complexes of the respiratory chain. F-type ATPases consist of two structural domains, F(1) - containing the extramembraneous catalytic core and F(0) - containing the membrane proton channel, linked together by a central stalk and a peripheral stalk. During catalysis, ATP synthesis in the catalytic domain of F(1) is coupled via a rotary mechanism of the central stalk subunits to proton translocation. Part of the complex F(0) domain. A homomeric c-ring of probably 10 subunits is part of the complex rotary element. The protein is ATP synthase subunit 9, mitochondrial (ATP9) of Trichophyton rubrum (Athlete's foot fungus).